Reading from the N-terminus, the 418-residue chain is Glycine betaine transport ATP-binding protein OpuAA (418 aa).

The 237-residue stretch at 34-270 folds into the ABC transporter domain; it reads KTKKEILKAT…PSNEYVEKFV (237 aa). 66-73 lines the ATP pocket; sequence GLSGSGKS. CBS domains lie at 284–340 and 344–403; these read IMKR…DLSL and LNTE…INAE.

The protein belongs to the ABC transporter superfamily. In terms of assembly, the complex is composed of two ATP-binding proteins (OpuAA), two transmembrane proteins (OpuAB) and a solute-binding protein (OpuAC).

It carries out the reaction a quaternary ammonium(out) + ATP + H2O = a quaternary ammonium(in) + ADP + phosphate + H(+). Its function is as follows. Involved in a multicomponent binding-protein-dependent transport system for glycine betaine. Probably responsible for energy coupling to the transport system. This chain is Glycine betaine transport ATP-binding protein OpuAA (opuAA), found in Bacillus subtilis (strain 168).